Here is a 400-residue protein sequence, read N- to C-terminus: Exodeoxyribonuclease 7 large subunit (400 aa).

The protein belongs to the XseA family. Heterooligomer composed of large and small subunits.

Its subcellular location is the cytoplasm. The enzyme catalyses Exonucleolytic cleavage in either 5'- to 3'- or 3'- to 5'-direction to yield nucleoside 5'-phosphates.. Bidirectionally degrades single-stranded DNA into large acid-insoluble oligonucleotides, which are then degraded further into small acid-soluble oligonucleotides. The protein is Exodeoxyribonuclease 7 large subunit of Clostridium kluyveri (strain NBRC 12016).